The following is a 205-amino-acid chain: Ribosomal RNA small subunit methyltransferase G (205 aa).

Residues Gly-70, Leu-75, 121–122 (IE), and Arg-136 contribute to the S-adenosyl-L-methionine site.

This sequence belongs to the methyltransferase superfamily. RNA methyltransferase RsmG family.

It is found in the cytoplasm. It catalyses the reaction guanosine(527) in 16S rRNA + S-adenosyl-L-methionine = N(7)-methylguanosine(527) in 16S rRNA + S-adenosyl-L-homocysteine. Its function is as follows. Specifically methylates the N7 position of guanine in position 527 of 16S rRNA. The sequence is that of Ribosomal RNA small subunit methyltransferase G from Methylococcus capsulatus (strain ATCC 33009 / NCIMB 11132 / Bath).